The chain runs to 381 residues: Protein COS1 (381 aa).

Topologically, residues 1–42 (MKENELKNEKSVDVLSFKQLESQKIVLPQDLFRSSFTWFCYE) are cytoplasmic. A helical transmembrane segment spans residues 43 to 63 (IYKSLAFRIWMLLWLPLSVWW). Residues 64–72 (KLSNNCIYP) are Extracellular-facing. The chain crosses the membrane as a helical span at residues 73–93 (LIVSLLVLFLGPIFVLVICGL). Over 94-231 (SRKRSLSKQL…YRFKLTWFLK (138 aa)) the chain is Cytoplasmic. A helical membrane pass occupies residues 232-252 (RISNIFMLIPFLNFLCCIYVS). At 253–254 (RG) the chain is on the extracellular side. Residues 255–275 (MCLLLRTFYLGWILFMLVQGF) traverse the membrane as a helical segment. The Cytoplasmic portion of the chain corresponds to 276-381 (QNMRMIVLSV…QLSCSEESLA (106 aa)).

Belongs to the DUP/COS family.

Its subcellular location is the membrane. This is Protein COS1 (COS1) from Saccharomyces cerevisiae (strain ATCC 204508 / S288c) (Baker's yeast).